Here is a 567-residue protein sequence, read N- to C-terminus: MATEGRGKETNEIKTHFTTREGLYRLLPHSEYSRPNRVPFNSQGSNPVRVSFVNLNDQTGNGNRLCFSVGRELYVYIYKGVRKAADLSKPIDKRIYKGTQPTCHDFNHLTATAESVSLLVGFSAGQVQLIDPIKKETSKLFNEERLIDKSRVTCVKWVPGSDSLFLVAHSSGNMYSYNVEHTYGTTAPHYQLLKQGESFAVHNCKSKSTRDLKWTVGEGALNEFAFSPDGKFLACVSQDGFLRVFNFDSAELHGTMKSYFGGLLCLCWSPDGKYIVTGGEDDLVTVWSFLDCRVIARGRGHKSWVSVVAFDPYTTSVEESDPMEFSDSDKNFQDLLHFGRDRANSTQSRLSKQNSTDSRPVSVTYRFGSVGQDTQLCLWDLTEDILFPHQPLSRARAHANVMNATGLPAGSNGSAVTTPGNSVPPPLPRSNSLPHSAVSNAASKGSVMDGAITSGVSKFALLSLHDRKERHHEKDRKRNHSMGHISSKSSDKLNLVNKAKTDPAKTLGTSLCPRMEDVPLLEPLICKKIAHERLTVLVFLEDCIVTACQEGFICTWARPGKVSKFQP.

Position 2 is an N-acetylalanine (Ala2). 4 WD repeats span residues 147–187, 216–257, 258–297, and 345–389; these read IDKS…GTTA, VGEG…GTMK, SYFGGLLCLCWSPDGKYIVTGGEDDLVTVWSFLDCRVIAR, and STQS…LFPH. Phosphoserine is present on residues Ser355 and Ser358. Residues 408 to 441 are disordered; that stretch reads PAGSNGSAVTTPGNSVPPPLPRSNSLPHSAVSNA. Polar residues-rich tracts occupy residues 411–421 and 429–441; these read SNGSAVTTPGN and RSNSLPHSAVSNA. 3 positions are modified to phosphoserine: Ser430, Ser432, and Ser463. Residues 468–481 are compositionally biased toward basic residues; the sequence is KERHHEKDRKRNHS. Residues 468–493 form a disordered region; that stretch reads KERHHEKDRKRNHSMGHISSKSSDKL. A WD 5 repeat occupies 529–566; it reads IAHERLTVLVFLEDCIVTACQEGFICTWARPGKVSKFQ.

In terms of assembly, interacts with USP12; promotes translocation of USP12/WDR20 to the plasma membrane. Component of the USP12/WDR20/WDR48 deubiquitinating complex. Interacts with USP46; contributes to the cytoplasmic localization of the USP46/WDR20 complex. Component of the USP12/DMWD/WDR48 deubiquitinating complex.

Its subcellular location is the cytoplasm. It localises to the nucleus. In terms of biological role, regulator of deubiquitinating complexes. Activates deubiquitinating activity of complexes containing USP12. Anchors at the base of the ubiquitin-contacting loop of USP12 and remotely modulates the catalytic center of the enzyme. Regulates shuttling of complexes containing USP12 between the plasma membrane, cytoplasm and nucleus. In Mus musculus (Mouse), this protein is WD repeat-containing protein 20 (Wdr20).